The primary structure comprises 357 residues: Hemolysin VllY (357 aa).

VOC domains follow at residues 12–132 and 162–313; these read GFEF…FVDR and EIDH…IFTQ. His-165, His-243, and Glu-322 together coordinate Fe cation.

The protein belongs to the 4HPPD family. Fe cation serves as cofactor.

In Vibrio vulnificus (strain CMCP6), this protein is Hemolysin VllY (vllY).